We begin with the raw amino-acid sequence, 287 residues long: Large ribosomal subunit protein uL2 (287 aa).

The segment at 221–287 is disordered; sequence RGSVMNPCDH…SKRSRGGRDS (67 aa). A compositionally biased stretch (basic residues) spans 258–287; it reads KTRKRNKPSNRFVLRKRRRTSKRSRGGRDS.

This sequence belongs to the universal ribosomal protein uL2 family. In terms of assembly, part of the 50S ribosomal subunit. Forms a bridge to the 30S subunit in the 70S ribosome.

In terms of biological role, one of the primary rRNA binding proteins. Required for association of the 30S and 50S subunits to form the 70S ribosome, for tRNA binding and peptide bond formation. It has been suggested to have peptidyltransferase activity; this is somewhat controversial. Makes several contacts with the 16S rRNA in the 70S ribosome. The polypeptide is Large ribosomal subunit protein uL2 (Prochlorococcus marinus (strain MIT 9313)).